The chain runs to 294 residues: Protoheme IX farnesyltransferase (294 aa).

9 consecutive transmembrane segments (helical) span residues 22–42 (VTQL…PDLP), 46–66 (IVIA…AINC), 89–109 (ITVP…MWVL), 116–136 (LTMW…TIIL), 143–163 (NIVI…AAVA), 170–190 (AWIL…ALAL), 211–231 (AFTQ…TMLP), 232–252 (FAVG…DVIF), and 272–292 (FTYS…DHYL).

Belongs to the UbiA prenyltransferase family. Protoheme IX farnesyltransferase subfamily.

Its subcellular location is the cell inner membrane. The catalysed reaction is heme b + (2E,6E)-farnesyl diphosphate + H2O = Fe(II)-heme o + diphosphate. It participates in porphyrin-containing compound metabolism; heme O biosynthesis; heme O from protoheme: step 1/1. Functionally, converts heme B (protoheme IX) to heme O by substitution of the vinyl group on carbon 2 of heme B porphyrin ring with a hydroxyethyl farnesyl side group. This Herminiimonas arsenicoxydans protein is Protoheme IX farnesyltransferase.